The sequence spans 265 residues: Mlc titration factor A (265 aa).

Zn(2+) contacts are provided by H111, H148, H152, and E211.

The protein belongs to the MtfA family. Interacts with Mlc. It depends on Zn(2+) as a cofactor.

Its subcellular location is the cytoplasm. Functionally, involved in the modulation of the activity of the glucose-phosphotransferase system (glucose-PTS). Interacts with the transcriptional repressor Mlc, preventing its interaction with DNA and leading to the modulation of expression of genes regulated by Mlc, including ptsG, which encodes the PTS system glucose-specific EIICB component. Shows zinc-dependent metallopeptidase activity. The polypeptide is Mlc titration factor A (Salmonella enteritidis PT4 (strain P125109)).